The primary structure comprises 78 residues: UPF0291 protein MCCL_0996 (78 aa).

Belongs to the UPF0291 family.

Its subcellular location is the cytoplasm. This chain is UPF0291 protein MCCL_0996, found in Macrococcus caseolyticus (strain JCSC5402) (Macrococcoides caseolyticum).